Here is a 158-residue protein sequence, read N- to C-terminus: Snaclec agglucetin subunit alpha-2 (158 aa).

Positions 1–23 are cleaved as a signal peptide; it reads MGRFIFVSFGLLVVFLSLSGTGA. Disulfide bonds link cysteine 27–cysteine 38, cysteine 55–cysteine 152, and cysteine 127–cysteine 144. Residues 34-153 enclose the C-type lectin domain; it reads YDQYCYQVIK…CIQLNPFVCK (120 aa).

Belongs to the snaclec family. Heterotetramer of the subunits alpha-1, alpha-2, beta-1 and beta-2; disulfide-linked. Expressed by the venom gland.

It localises to the secreted. In terms of biological role, agglucetin specifically causes platelet aggregation and surface exposure of integrin alpha-IIb/beta-3 with a GPIb-(GP1BA-) dependent manner in washed platelets. It binds to human platelets in a saturable manner, and its binding is specifically blocked by anti-GP Ib mAb. It regulates endothelial cell survival and promotes angiogenesis by activating integrin alpha-v/beta-3 signaling through FAK/phosphatidylinositol 3-kinase (PI3K)/Akt pathway. The protein is Snaclec agglucetin subunit alpha-2 of Deinagkistrodon acutus (Hundred-pace snake).